Here is a 376-residue protein sequence, read N- to C-terminus: Chaperone protein DnaJ (376 aa).

Residues 5-70 enclose the J domain; sequence DYYEVLGVAR…NKRRMYDSHG (66 aa). Residues 132–209 form a CR-type zinc finger; that stretch reads GVERRIEIPT…CHGNGRVEED (78 aa). Residues cysteine 145, cysteine 148, cysteine 161, cysteine 164, cysteine 183, cysteine 186, cysteine 197, and cysteine 200 each contribute to the Zn(2+) site. 4 CXXCXGXG motif repeats span residues 145–152, 161–168, 183–190, and 197–204; these read CGDCDGSG, CNVCHGRG, CHNCGGRG, and CKTCHGNG. Residues 223–242 form a disordered region; that stretch reads GDRIRLSGEGEAGPAGTPPG.

The protein belongs to the DnaJ family. In terms of assembly, homodimer. The cofactor is Zn(2+).

It localises to the cytoplasm. Its function is as follows. Participates actively in the response to hyperosmotic and heat shock by preventing the aggregation of stress-denatured proteins and by disaggregating proteins, also in an autonomous, DnaK-independent fashion. Unfolded proteins bind initially to DnaJ; upon interaction with the DnaJ-bound protein, DnaK hydrolyzes its bound ATP, resulting in the formation of a stable complex. GrpE releases ADP from DnaK; ATP binding to DnaK triggers the release of the substrate protein, thus completing the reaction cycle. Several rounds of ATP-dependent interactions between DnaJ, DnaK and GrpE are required for fully efficient folding. Also involved, together with DnaK and GrpE, in the DNA replication of plasmids through activation of initiation proteins. This chain is Chaperone protein DnaJ, found in Stenotrophomonas maltophilia (strain R551-3).